The following is a 509-amino-acid chain: Probable DNA ligase (509 aa).

Asp218 contributes to the ATP binding site. Lys220 (N6-AMP-lysine intermediate) is an active-site residue. The ATP site is built by Arg225, Arg240, Glu269, Phe302, Arg374, and Lys380.

It belongs to the ATP-dependent DNA ligase family. Mg(2+) is required as a cofactor.

The enzyme catalyses ATP + (deoxyribonucleotide)n-3'-hydroxyl + 5'-phospho-(deoxyribonucleotide)m = (deoxyribonucleotide)n+m + AMP + diphosphate.. Its function is as follows. DNA ligase that seals nicks in double-stranded DNA during DNA replication, DNA recombination and DNA repair. In Nocardioides sp. (strain ATCC BAA-499 / JS614), this protein is Probable DNA ligase.